The chain runs to 146 residues: Large ribosomal subunit protein uL15 (146 aa).

A compositionally biased stretch (basic and acidic residues) spans 1-13 (MKLHELHSAEGSR). Residues 1–55 (MKLHELHSAEGSRRNRKRVGRGTSSGYGKTSGRGQKGQLARQGGHTRLGFEGGQM) are disordered. The span at 23–35 (TSSGYGKTSGRGQ) shows a compositional bias: gly residues.

This sequence belongs to the universal ribosomal protein uL15 family. Part of the 50S ribosomal subunit.

Binds to the 23S rRNA. The chain is Large ribosomal subunit protein uL15 from Lactobacillus acidophilus (strain ATCC 700396 / NCK56 / N2 / NCFM).